Reading from the N-terminus, the 210-residue chain is MRKRQQSQNEGTPAVSQAPGNQRPNNTCCFCWCCCCSCSCLTVRNEERGENAGRPTHTTKMESIQVLEECQNPTAEEVLSWSQNFDKMMKAPAGRNLFREFLRTEYSEENLLFWLACEDLKKEQNKKVIEEKARMIYEDYISILSPKEVSLDSRVREVINRNLLDPNPHMYEDAQLQIYTLMHRDSFPRFLNSQIYKSFVESTAGSSSES.

The tract at residues 1 to 21 (MRKRQQSQNEGTPAVSQAPGN) is disordered. One can recognise an RGS domain in the interval 84–200 (NFDKMMKAPA…LNSQIYKSFV (117 aa)). Tyr137 bears the Phosphotyrosine mark.

Interacts with GNAI1 and GNAQ. Interacts with GNAZ and GNAI2. Interacts with OPRM1. Forms a complex with mu-opioid receptors and G(alpha)z/i2 subunits, including GNAZ and GNAI2; the formation of this complex results in mu-opioid receptor desensitization. Interacts with HINT1. In terms of processing, N- and O-glycosylated in synapsomal membranes. Post-translationally, serine phosphorylated in synapsomal membranes. Sumoylated with SUMO1 and SUM02 in synaptosomes. The sumoylated forms act as a scaffold for sequestering mu-opioid receptor-activated G(alpha) subunits. Desumoylated by HINT1. As to expression, predominantly expressed in the cerebellum. Also expressed in the cortex and medulla. Weakly expressed in a number of peripheral tissues notably spleen, lung and leukocytes.

It localises to the membrane. The protein localises to the synapse. Its subcellular location is the synaptosome. It is found in the nucleus. The protein resides in the cytoplasm. Functionally, regulates G protein-coupled receptor signaling cascades, including signaling via muscarinic acetylcholine receptor CHRM2 and dopamine receptor DRD2. Inhibits signal transduction by increasing the GTPase activity of G protein alpha subunits, thereby driving them into their inactive GDP-bound form. Binds selectively to GNAZ and GNAI2 subunits, accelerates their GTPase activity and regulates their signaling activities. Negatively regulates mu-opioid receptor-mediated activation of the G-proteins. This is Regulator of G-protein signaling 17 (RGS17) from Homo sapiens (Human).